Here is a 494-residue protein sequence, read N- to C-terminus: Ketol-acid reductoisomerase (NADP(+)) (494 aa).

The 195-residue stretch at 14 to 208 (LDQLGRCRFM…GGHRAGVLES (195 aa)) folds into the KARI N-terminal Rossmann domain. NADP(+) is bound by residues 45-48 (CGAQ), R68, R76, S78, and 108-110 (DKQ). H132 is an active-site residue. NADP(+) is bound at residue G158. 2 KARI C-terminal knotted domains span residues 209 to 344 (SFVA…NYPV) and 345 to 487 (TDVE…MTDM). Residues D217, E221, E389, and E393 each contribute to the Mg(2+) site. S414 contacts substrate.

Belongs to the ketol-acid reductoisomerase family. Mg(2+) serves as cofactor.

It carries out the reaction (2R)-2,3-dihydroxy-3-methylbutanoate + NADP(+) = (2S)-2-acetolactate + NADPH + H(+). The enzyme catalyses (2R,3R)-2,3-dihydroxy-3-methylpentanoate + NADP(+) = (S)-2-ethyl-2-hydroxy-3-oxobutanoate + NADPH + H(+). It functions in the pathway amino-acid biosynthesis; L-isoleucine biosynthesis; L-isoleucine from 2-oxobutanoate: step 2/4. It participates in amino-acid biosynthesis; L-valine biosynthesis; L-valine from pyruvate: step 2/4. In terms of biological role, involved in the biosynthesis of branched-chain amino acids (BCAA). Catalyzes an alkyl-migration followed by a ketol-acid reduction of (S)-2-acetolactate (S2AL) to yield (R)-2,3-dihydroxy-isovalerate. In the isomerase reaction, S2AL is rearranged via a Mg-dependent methyl migration to produce 3-hydroxy-3-methyl-2-ketobutyrate (HMKB). In the reductase reaction, this 2-ketoacid undergoes a metal-dependent reduction by NADPH to yield (R)-2,3-dihydroxy-isovalerate. In Photobacterium profundum (strain SS9), this protein is Ketol-acid reductoisomerase (NADP(+)).